The sequence spans 896 residues: Chromatin assembly factor 1 subunit A-A (896 aa).

Disordered regions lie at residues 1–23 (MPGK…KKMV), 185–377 (TSTS…EEEK), and 552–610 (DSDE…DPEN). Residues 10-21 (VMQSSTKSNTKK) are compositionally biased toward polar residues. The span at 211–226 (ASVSSSSSPVSLSSPD) shows a compositional bias: low complexity. Over residues 227-236 (AQTGSQFRNR) the composition is skewed to polar residues. Positions 237–246 (SSPSTSTTPT) are enriched in low complexity. Residues 255-284 (SADKNKTKDKDKQRQAEKEERERAKKEARS) show a composition bias toward basic and acidic residues. The segment covering 285–302 (AKKKKRQGLLKNLQRKRG) has biased composition (basic residues). Over residues 308–377 (SGKEYKKEKK…EEKRLKEEEK (70 aa)) the composition is skewed to basic and acidic residues. Composition is skewed to acidic residues over residues 552–563 (DSDEEWEEEEPG), 572–586 (ENDD…DDDG), and 595–607 (SDDE…ECTD). The tract at residues 642–678 (CVWWDSKASEISLLQKFSACILESPAVDEELAQEISS) is necessary for homodimerization, competence for chromatin assembly. The segment at 724 to 743 (SDAAGNESTSPNVTPQTPSN) is disordered. Polar residues predominate over residues 729-743 (NESTSPNVTPQTPSN).

This sequence belongs to the CHAF1A family. In terms of assembly, homodimer.

It is found in the nucleus. Its function is as follows. Involved in chromatin assembly in DNA replication and DNA repair. The sequence is that of Chromatin assembly factor 1 subunit A-A (chaf1a-a) from Xenopus laevis (African clawed frog).